A 49-amino-acid chain; its full sequence is uncharacterized protein (49 aa).

This is an uncharacterized protein from Bacillus subtilis (strain 168).